The sequence spans 481 residues: Proline--tRNA ligase (481 aa).

It belongs to the class-II aminoacyl-tRNA synthetase family. ProS type 3 subfamily. Homodimer.

It is found in the cytoplasm. It catalyses the reaction tRNA(Pro) + L-proline + ATP = L-prolyl-tRNA(Pro) + AMP + diphosphate. In terms of biological role, catalyzes the attachment of proline to tRNA(Pro) in a two-step reaction: proline is first activated by ATP to form Pro-AMP and then transferred to the acceptor end of tRNA(Pro). This chain is Proline--tRNA ligase, found in Chlorobium chlorochromatii (strain CaD3).